A 131-amino-acid polypeptide reads, in one-letter code: Protein Turandot M (131 aa).

The signal sequence occupies residues 1–23 (MNPTVYLSCLVVFSLFYLGKAQA).

Belongs to the Turandot family.

The protein localises to the secreted. A humoral factor that may play a role in stress tolerance. Requires Mekk1 expression in the fat body to regulate response to septic injury and consequent immune response. This is Protein Turandot M from Drosophila yakuba (Fruit fly).